Reading from the N-terminus, the 362-residue chain is 3-dehydroquinate synthase (362 aa).

NAD(+)-binding positions include 71–76 (DGEQYK), 105–109 (GVVGD), 129–130 (TT), lysine 142, lysine 151, and 169–172 (CLNT). Positions 184, 247, and 264 each coordinate Zn(2+).

This sequence belongs to the sugar phosphate cyclases superfamily. Dehydroquinate synthase family. Co(2+) serves as cofactor. Requires Zn(2+) as cofactor. The cofactor is NAD(+).

The protein localises to the cytoplasm. It carries out the reaction 7-phospho-2-dehydro-3-deoxy-D-arabino-heptonate = 3-dehydroquinate + phosphate. Its pathway is metabolic intermediate biosynthesis; chorismate biosynthesis; chorismate from D-erythrose 4-phosphate and phosphoenolpyruvate: step 2/7. Catalyzes the conversion of 3-deoxy-D-arabino-heptulosonate 7-phosphate (DAHP) to dehydroquinate (DHQ). This is 3-dehydroquinate synthase from Enterobacter sp. (strain 638).